A 465-amino-acid chain; its full sequence is Gamma-aminobutyric acid receptor subunit rho-2 (465 aa).

Residues 1–20 (MPYLMRLALVLFCLMALVES) form the signal peptide. Residues 21–260 (RKPRRKRWTG…LYINFTLRRH (240 aa)) lie on the Extracellular side of the membrane. R105 is a 4-aminobutanoate binding site. N-linked (GlcNAc...) asparagine glycosylation is present at N120. S169 contacts 4-aminobutanoate. A disulfide bond links C178 and C192. E197 contributes to the 4-aminobutanoate binding site. N254 is a glycosylation site (N-linked (GlcNAc...) asparagine). Residues 261 to 281 (IFFFLLQTYFPATLMVMLSWV) traverse the membrane as a helical segment. Residues 282–293 (SFWIDHRAVPAR) are Cytoplasmic-facing. Residues 294-314 (VSLGIMTVLTMSTIITGVNAS) traverse the membrane as a helical segment. Residues 315–325 (MPRVSYIRAVD) are Extracellular-facing. A helical membrane pass occupies residues 326–346 (IYLWVSFVFVFLSVLEYAAVN). Residues 347–443 (YLTTLQEQKE…IFQNTHAIDK (97 aa)) lie on the Cytoplasmic side of the membrane. A helical membrane pass occupies residues 444-464 (YSRLIFPAFYIVFNLIYWSVF). Residue S465 is a topological domain, extracellular.

This sequence belongs to the ligand-gated ion channel (TC 1.A.9) family. Gamma-aminobutyric acid receptor (TC 1.A.9.5) subfamily. GABRR2 sub-subfamily. Three rho subunits (rho-1/GBRR1, rho-2/GBRR2 and rho-3/GBRR3) coassemble either to form functional homopentamers or heteropentamers. Rho-2 is unable to form a functional homopentamer. Interacts with SQSTM1. In terms of tissue distribution, expressed in the cerebellum.

It is found in the postsynaptic cell membrane. The protein resides in the cell membrane. It carries out the reaction chloride(in) = chloride(out). In terms of biological role, rho subunit of the pentameric ligand-gated chloride channels responsible for mediating the effects of gamma-aminobutyric acid (GABA), the major inhibitory neurotransmitter in the brain. Rho-containing GABA-gated chloride channels are a subclass of GABA(A) receptors (GABAARs) entirely composed of rho subunits, where GABA molecules bind at the rho intersubunit interfaces. When activated by GABA, rho-GABAARs selectively allow the flow of chloride anions across the cell membrane down their electrochemical gradient. Rho-2 GABAARs may contribute to the regulation of glial development in the cerebellum by controlling extrasynaptic transmission. Rho-2 GABAARs are also involved in neuronal tonic (extrasynaptic) and phasic (synaptic) transmission in the Purkinje neurons of the cerebellum. Rho-2 GABAARs expressed in retina may play a role in retinal neurotransmission. The protein is Gamma-aminobutyric acid receptor subunit rho-2 of Mus musculus (Mouse).